Here is a 1024-residue protein sequence, read N- to C-terminus: Isoleucine--tRNA ligase (1024 aa).

Positions 52-62 match the 'HIGH' region motif; it reads PTANGRPHVGH. A 'KMSKS' region motif is present at residues 590-594; it reads KMSKS. Lys593 is a binding site for ATP.

Belongs to the class-I aminoacyl-tRNA synthetase family. IleS type 2 subfamily. Monomer. Zn(2+) is required as a cofactor.

The protein localises to the cytoplasm. It catalyses the reaction tRNA(Ile) + L-isoleucine + ATP = L-isoleucyl-tRNA(Ile) + AMP + diphosphate. Functionally, catalyzes the attachment of isoleucine to tRNA(Ile). As IleRS can inadvertently accommodate and process structurally similar amino acids such as valine, to avoid such errors it has two additional distinct tRNA(Ile)-dependent editing activities. One activity is designated as 'pretransfer' editing and involves the hydrolysis of activated Val-AMP. The other activity is designated 'posttransfer' editing and involves deacylation of mischarged Val-tRNA(Ile). This chain is Isoleucine--tRNA ligase, found in Picrophilus torridus (strain ATCC 700027 / DSM 9790 / JCM 10055 / NBRC 100828 / KAW 2/3).